The following is a 159-amino-acid chain: Transcriptional repressor NrdR (159 aa).

The segment at cysteine 3–cysteine 34 is a zinc-finger region. In terms of domain architecture, ATP-cone spans leucine 49–aspartate 139.

Belongs to the NrdR family. It depends on Zn(2+) as a cofactor.

Its function is as follows. Negatively regulates transcription of bacterial ribonucleotide reductase nrd genes and operons by binding to NrdR-boxes. The polypeptide is Transcriptional repressor NrdR (Mesorhizobium japonicum (strain LMG 29417 / CECT 9101 / MAFF 303099) (Mesorhizobium loti (strain MAFF 303099))).